A 276-amino-acid polypeptide reads, in one-letter code: 2-dehydro-3-deoxyphosphooctonate aldolase (276 aa).

It belongs to the KdsA family.

It is found in the cytoplasm. It catalyses the reaction D-arabinose 5-phosphate + phosphoenolpyruvate + H2O = 3-deoxy-alpha-D-manno-2-octulosonate-8-phosphate + phosphate. Its pathway is carbohydrate biosynthesis; 3-deoxy-D-manno-octulosonate biosynthesis; 3-deoxy-D-manno-octulosonate from D-ribulose 5-phosphate: step 2/3. It participates in bacterial outer membrane biogenesis; lipopolysaccharide biosynthesis. This Helicobacter pylori (strain HPAG1) protein is 2-dehydro-3-deoxyphosphooctonate aldolase.